The chain runs to 654 residues: RNA polymerase I-specific transcription initiation factor tif-1A (654 aa).

The interval 1–37 is disordered; the sequence is MKRSTANAPKLSPKHESESDPKKVKLEEEAKPTVNQA. Basic and acidic residues predominate over residues 13–31; sequence PKHESESDPKKVKLEEEAK.

This sequence belongs to the RRN3 family.

It is found in the nucleus. Its subcellular location is the nucleolus. Its function is as follows. Required for efficient transcription initiation by RNA polymerase I (Pol I). The polypeptide is RNA polymerase I-specific transcription initiation factor tif-1A (Caenorhabditis elegans).